Here is a 406-residue protein sequence, read N- to C-terminus: NADH-quinone oxidoreductase subunit D (406 aa).

This sequence belongs to the complex I 49 kDa subunit family. NDH-1 is composed of 14 different subunits. Subunits NuoB, C, D, E, F, and G constitute the peripheral sector of the complex.

It localises to the cell inner membrane. It catalyses the reaction a quinone + NADH + 5 H(+)(in) = a quinol + NAD(+) + 4 H(+)(out). In terms of biological role, NDH-1 shuttles electrons from NADH, via FMN and iron-sulfur (Fe-S) centers, to quinones in the respiratory chain. The immediate electron acceptor for the enzyme in this species is believed to be ubiquinone. Couples the redox reaction to proton translocation (for every two electrons transferred, four hydrogen ions are translocated across the cytoplasmic membrane), and thus conserves the redox energy in a proton gradient. This chain is NADH-quinone oxidoreductase subunit D, found in Rhizorhabdus wittichii (strain DSM 6014 / CCUG 31198 / JCM 15750 / NBRC 105917 / EY 4224 / RW1) (Sphingomonas wittichii).